The primary structure comprises 188 residues: Acireductone dioxygenase (188 aa).

Residues His97, His99, Glu103, and His141 each coordinate Fe(2+). Ni(2+) is bound by residues His97, His99, Glu103, and His141.

Belongs to the acireductone dioxygenase (ARD) family. Monomer. Requires Fe(2+) as cofactor. Ni(2+) serves as cofactor.

It catalyses the reaction 1,2-dihydroxy-5-(methylsulfanyl)pent-1-en-3-one + O2 = 3-(methylsulfanyl)propanoate + CO + formate + 2 H(+). The catalysed reaction is 1,2-dihydroxy-5-(methylsulfanyl)pent-1-en-3-one + O2 = 4-methylsulfanyl-2-oxobutanoate + formate + 2 H(+). Its pathway is amino-acid biosynthesis; L-methionine biosynthesis via salvage pathway; L-methionine from S-methyl-5-thio-alpha-D-ribose 1-phosphate: step 5/6. Catalyzes 2 different reactions between oxygen and the acireductone 1,2-dihydroxy-3-keto-5-methylthiopentene (DHK-MTPene) depending upon the metal bound in the active site. Fe-containing acireductone dioxygenase (Fe-ARD) produces formate and 2-keto-4-methylthiobutyrate (KMTB), the alpha-ketoacid precursor of methionine in the methionine recycle pathway. Ni-containing acireductone dioxygenase (Ni-ARD) produces methylthiopropionate, carbon monoxide and formate, and does not lie on the methionine recycle pathway. This chain is Acireductone dioxygenase, found in Xylella fastidiosa (strain M23).